Consider the following 509-residue polypeptide: Photosystem II CP47 reaction center protein (509 aa).

6 helical membrane passes run 21–36, 101–115, 140–156, 203–218, 237–252, and 457–472; these read AVHL…WAGS, IILS…IWHW, GIHL…FGAF, IAAG…FHLT, VLSS…AFVT, and NFAL…HGGR.

The protein belongs to the PsbB/PsbC family. PsbB subfamily. In terms of assembly, PSII is composed of 1 copy each of membrane proteins PsbA, PsbB, PsbC, PsbD, PsbE, PsbF, PsbH, PsbI, PsbJ, PsbK, PsbL, PsbM, PsbT, PsbX, PsbY, PsbZ, Psb30/Ycf12, at least 3 peripheral proteins of the oxygen-evolving complex and a large number of cofactors. It forms dimeric complexes. Binds multiple chlorophylls. PSII binds additional chlorophylls, carotenoids and specific lipids. serves as cofactor.

The protein localises to the plastid. It is found in the chloroplast thylakoid membrane. Its function is as follows. One of the components of the core complex of photosystem II (PSII). It binds chlorophyll and helps catalyze the primary light-induced photochemical processes of PSII. PSII is a light-driven water:plastoquinone oxidoreductase, using light energy to abstract electrons from H(2)O, generating O(2) and a proton gradient subsequently used for ATP formation. The polypeptide is Photosystem II CP47 reaction center protein (Trieres chinensis (Marine centric diatom)).